The primary structure comprises 1038 residues: Isoleucine--tRNA ligase (1038 aa).

The 'HIGH' region motif lies at 48-58 (PTANGKPHVGH). The 'KMSKS' region motif lies at 590 to 594 (KMSKS). Lys593 lines the ATP pocket.

This sequence belongs to the class-I aminoacyl-tRNA synthetase family. IleS type 2 subfamily. Monomer. Requires Zn(2+) as cofactor.

Its subcellular location is the cytoplasm. The enzyme catalyses tRNA(Ile) + L-isoleucine + ATP = L-isoleucyl-tRNA(Ile) + AMP + diphosphate. In terms of biological role, catalyzes the attachment of isoleucine to tRNA(Ile). As IleRS can inadvertently accommodate and process structurally similar amino acids such as valine, to avoid such errors it has two additional distinct tRNA(Ile)-dependent editing activities. One activity is designated as 'pretransfer' editing and involves the hydrolysis of activated Val-AMP. The other activity is designated 'posttransfer' editing and involves deacylation of mischarged Val-tRNA(Ile). The protein is Isoleucine--tRNA ligase of Clostridium novyi (strain NT).